Here is a 62-residue protein sequence, read N- to C-terminus: MDSFSSLFMKLCCISTDKTGSKKSDRKNKNKIKDYMEHDYYKITIVPGSSSTSTSSWYYTHA.

The protein belongs to the orthopoxviruses A37.5 protein family.

In Homo sapiens (Human), this protein is Protein A37.5 homolog (A40_5R).